Consider the following 367-residue polypeptide: Aspartate-semialdehyde dehydrogenase (367 aa).

NADP(+) is bound by residues 10–13, 37–38, and Q73; these read RGMV and TS. R102 contacts phosphate. Catalysis depends on C135, which acts as the Acyl-thioester intermediate. C135 bears the S-cysteinyl cysteine; in inhibited form mark. Residue Q162 coordinates substrate. Residues 165–169, R173, and P193 each bind NADP(+); that span reads SGGGA. E241 provides a ligand contact to substrate. A phosphate-binding site is contributed by K244. Substrate is bound at residue R267. H274 functions as the Proton acceptor in the catalytic mechanism. Q350 contacts NADP(+).

This sequence belongs to the aspartate-semialdehyde dehydrogenase family. Homodimer.

The catalysed reaction is L-aspartate 4-semialdehyde + phosphate + NADP(+) = 4-phospho-L-aspartate + NADPH + H(+). The protein operates within amino-acid biosynthesis; L-lysine biosynthesis via DAP pathway; (S)-tetrahydrodipicolinate from L-aspartate: step 2/4. It functions in the pathway amino-acid biosynthesis; L-methionine biosynthesis via de novo pathway; L-homoserine from L-aspartate: step 2/3. Its pathway is amino-acid biosynthesis; L-threonine biosynthesis; L-threonine from L-aspartate: step 2/5. Its activity is regulated as follows. Is inhibited by L- and D-cystine, and by other cystine derivatives, via the formation of a covalently bound cysteine at the active site Cys-135. In terms of biological role, catalyzes the NADPH-dependent formation of L-aspartate-semialdehyde (L-ASA) by the reductive dephosphorylation of L-aspartyl-4-phosphate. The chain is Aspartate-semialdehyde dehydrogenase from Escherichia coli (strain K12).